The chain runs to 835 residues: Protein VP3 (835 aa).

The N7-methyltransferase activity stretch occupies residues lysine 171–arginine 245. The segment at tryptophan 246 to glycine 428 is 2'-O-methyltransferase activity. Residues valine 429–aspartate 555 form an N7-methyltransferase activity region. Positions lysine 556 to threonine 692 are GTase/RTPase activity. The segment at tyrosine 693–glutamate 835 is 2'-5'-phosphodiesterase activity. Active-site for 2'-5'-phosphodiesterase activity residues include histidine 718, threonine 720, histidine 797, and threonine 799.

It belongs to the rotavirus VP3 family. As to quaternary structure, interacts with VP1. Interacts with VP2.

It localises to the virion. The enzyme catalyses a 5'-end diphospho-ribonucleoside in mRNA + GTP + H(+) = a 5'-end (5'-triphosphoguanosine)-ribonucleoside in mRNA + diphosphate. It carries out the reaction a 5'-end (5'-triphosphoguanosine)-ribonucleoside in mRNA + S-adenosyl-L-methionine = a 5'-end (N(7)-methyl 5'-triphosphoguanosine)-ribonucleoside in mRNA + S-adenosyl-L-homocysteine. It catalyses the reaction 5'-triphosphoadenylyl-(2'-&gt;5')-adenylyl-(2'-&gt;5')-adenosine + 2 H2O = 2 AMP + ATP + 2 H(+). Multifunctional enzyme involved in mRNA capping. Catalyzes the formation of the 5' cap structure on the viral plus-strand transcripts. Specifically binds to GTP and displays guanylyltransferase and methyltransferase activities. Has affinity for ssRNA but not for dsRNA. Capping activity is non-specific and caps RNAs that initiate with either a G or an A residue. Together with VP1 polymerase, forms a VP1-VP3 complex positioned near the channels situated at each of the five-fold vertices of the core. Following infection, the outermost layer of the virus is lost, leaving a double-layered particle (DLP) made up of the core and VP6 shell. VP1 then catalyzes the transcription of fully conservative plus-strand genomic RNAs that are capped by VP3 and extruded through the DLP's channels into the cytoplasm where they function as mRNAs for translation of viral proteins. DLPs probably have an RNA triphosphatase activity as well, whereas open cores do not. Functionally, counteracts the host innate immune response thanks to its phosphodiesterase that degrades the 5'-triphosphorylated, 2'-5' linked adenylate oligomers produced by the host cell IFN-inducible 2',5'-oligoadenylate synthetase (OAS). The host RNaseL is therefore not activated. This Rotavirus A (strain RVA/Human/United States/DS-1/1976/G2P1B[4]) (RV-A) protein is Protein VP3.